We begin with the raw amino-acid sequence, 225 residues long: MGFFITFEGIEGCGKTTQLRLLKERLEAAGEKVTVTREPGGCPVADQMRAILLDAKNSAITPLAELLLYAAARAQHVQEVIVPALERGETVLCDRFTDATVAYQGHGRGLDLTVIEELNTLATGRVQPALTVLIDCPVEVGLSRALARIEATSGAKEERFERESLLFHQKVRNGYLTLAAAFPERFVVVDGSGDVRQTGLLVAEALRQRMQSLGKAGLAAVKAGC.

9–16 (GIEGCGKT) serves as a coordination point for ATP.

This sequence belongs to the thymidylate kinase family.

The catalysed reaction is dTMP + ATP = dTDP + ADP. Phosphorylation of dTMP to form dTDP in both de novo and salvage pathways of dTTP synthesis. The sequence is that of Thymidylate kinase from Citrifermentans bemidjiense (strain ATCC BAA-1014 / DSM 16622 / JCM 12645 / Bem) (Geobacter bemidjiensis).